The sequence spans 309 residues: Calcium homeostasis modulator protein 5 (309 aa).

Topologically, residues 1-15 are cytoplasmic; sequence MDAFQGILKFFLNQK. A 1,2-diacyl-sn-glycero-3-phosphate is bound by residues Lys-15, Arg-32, and Val-37. Residues 16-37 traverse the membrane as a helical segment; it reads TVIGYSFMALLTVGSERLFSVV. Topologically, residues 38 to 45 are extracellular; that stretch reads AFKCPCST. Cystine bridges form between Cys-41–Cys-127, Cys-43–Cys-158, and Cys-142–Cys-149. Residues 46 to 70 traverse the membrane as a helical segment; sequence ENMTYGLVFLFAPAWVLLILGFFLN. The Cytoplasmic portion of the chain corresponds to 71–99; sequence NRSWRLFTGCCVNPRKIFPRGHSCRFFYV. Residues 100-129 traverse the membrane as a helical segment; it reads LGQITLSSLVAPVMWLSVALLNGTFYECAM. Residues Gln-102 and Asn-121 each coordinate a 1,2-diacyl-sn-glycero-3-phosphate. The Extracellular segment spans residues 130–174; sequence SGTRSSGLLELICKGKPKECWEELHKVSCGKTSMLPTVNEELKLS. Residues 175–200 traverse the membrane as a helical segment; it reads LQAQSQILGWCLICSASFFSLLTTCY. Residues 201-309 lie on the Cytoplasmic side of the membrane; the sequence is ARCRSKVSYL…MVLVGTAHNM (109 aa). Arg-202 serves as a coordination point for a 1,2-diacyl-sn-glycero-3-phosphate.

This sequence belongs to the CALHM family. Oligomerizes to form undecameric cone-shaped channels.

Its subcellular location is the membrane. Functionally, may assemble to form large pore channels with gating and ion conductance likely regulated by membrane lipids. In Homo sapiens (Human), this protein is Calcium homeostasis modulator protein 5.